A 1521-amino-acid polypeptide reads, in one-letter code: Suppressor of Ty 6 homolog (1521 aa).

The disordered stretch occupies residues 1-238 (MDFIDNQAEE…EEIIEDDGEG (238 aa)). Positions 26 to 41 (KKMKMAKEKSKRKKKM) are enriched in basic residues. A Nuclear localization signal motif is present at residues 26-42 (KKMKMAKEKSKRKKKMV). Acidic residues-rich tracts occupy residues 45-56 (SDEDEDDDDDEE) and 67-76 (ADDDDEEEDA). The segment covering 77–89 (KSEKSEKSRHSGE) has biased composition (basic and acidic residues). The segment covering 90 to 99 (DELDDEDLDL) has biased composition (acidic residues). Positions 126–157 (PIRRPNHEDDDLLSERGSDDGDRRKDRGRGDR) are enriched in basic and acidic residues. Acidic residues-rich tracts occupy residues 166 to 176 (RSEDDFIEDDG), 191 to 200 (NLPEGAEDDA), and 209 to 238 (FNLD…DGEG). The region spanning 1183–1252 (LGDSRQGGCP…ERFSLFLSCK (70 aa)) is the S1 motif domain. Residues 1300–1389 (HPNFHNVSYE…IARFVQPMIQ (90 aa)) form the SH2 domain.

The protein belongs to the SPT6 family. Interacts with glp-1 and lin-12. As to expression, abundant in embryos, and less abundant in larvae.

The protein localises to the nucleus. Its function is as follows. Histone H3-H4 chaperone that plays a role in maintenance of chromatin structure during RNA polymerase II transcription elongation. Required for several aspects of morphogenesis of C.elegans, including regulation of division in the germline and gut and specification of ventral-uterine precursor cell fate. In Caenorhabditis elegans, this protein is Suppressor of Ty 6 homolog (emb-5).